The chain runs to 548 residues: Chaperonin GroEL (548 aa).

Residues Thr30–Pro33, Lys51, Asp87–Thr91, Gly415, Asn479–Ala481, and Asp495 each bind ATP.

Belongs to the chaperonin (HSP60) family. As to quaternary structure, forms a cylinder of 14 subunits composed of two heptameric rings stacked back-to-back. Interacts with the co-chaperonin GroES.

It localises to the cytoplasm. It catalyses the reaction ATP + H2O + a folded polypeptide = ADP + phosphate + an unfolded polypeptide.. In terms of biological role, together with its co-chaperonin GroES, plays an essential role in assisting protein folding. The GroEL-GroES system forms a nano-cage that allows encapsulation of the non-native substrate proteins and provides a physical environment optimized to promote and accelerate protein folding. The polypeptide is Chaperonin GroEL (Nitratidesulfovibrio vulgaris (strain DSM 19637 / Miyazaki F) (Desulfovibrio vulgaris)).